The primary structure comprises 260 residues: NAD kinase (260 aa).

The active-site Proton acceptor is the Asp-54. Residues 54–55, 123–124, Arg-150, Asp-152, and 163–168 contribute to the NAD(+) site; these read DG, ND, and TAYSLS.

It belongs to the NAD kinase family. A divalent metal cation is required as a cofactor.

It localises to the cytoplasm. The enzyme catalyses NAD(+) + ATP = ADP + NADP(+) + H(+). Involved in the regulation of the intracellular balance of NAD and NADP, and is a key enzyme in the biosynthesis of NADP. Catalyzes specifically the phosphorylation on 2'-hydroxyl of the adenosine moiety of NAD to yield NADP. The polypeptide is NAD kinase (Caldicellulosiruptor saccharolyticus (strain ATCC 43494 / DSM 8903 / Tp8T 6331)).